Here is a 272-residue protein sequence, read N- to C-terminus: 3-methyl-2-oxobutanoate hydroxymethyltransferase (272 aa).

Residues aspartate 51 and aspartate 90 each coordinate Mg(2+). Residues 51 to 52 (DS), aspartate 90, and lysine 119 each bind 3-methyl-2-oxobutanoate. Glutamate 121 provides a ligand contact to Mg(2+). The Proton acceptor role is filled by glutamate 188.

Belongs to the PanB family. As to quaternary structure, homodecamer; pentamer of dimers. The cofactor is Mg(2+).

The protein localises to the cytoplasm. It carries out the reaction 3-methyl-2-oxobutanoate + (6R)-5,10-methylene-5,6,7,8-tetrahydrofolate + H2O = 2-dehydropantoate + (6S)-5,6,7,8-tetrahydrofolate. Its pathway is cofactor biosynthesis; (R)-pantothenate biosynthesis; (R)-pantoate from 3-methyl-2-oxobutanoate: step 1/2. Catalyzes the reversible reaction in which hydroxymethyl group from 5,10-methylenetetrahydrofolate is transferred onto alpha-ketoisovalerate to form ketopantoate. The protein is 3-methyl-2-oxobutanoate hydroxymethyltransferase of Dechloromonas aromatica (strain RCB).